The sequence spans 112 residues: Peptidyl-tRNA hydrolase (112 aa).

The interval 64-99 (EEAKRAGLPTGLISDAGRTQLEPGTPTALAIGPAPD) is disordered.

This sequence belongs to the PTH2 family.

The protein resides in the cytoplasm. It catalyses the reaction an N-acyl-L-alpha-aminoacyl-tRNA + H2O = an N-acyl-L-amino acid + a tRNA + H(+). Its function is as follows. The natural substrate for this enzyme may be peptidyl-tRNAs which drop off the ribosome during protein synthesis. This chain is Peptidyl-tRNA hydrolase, found in Halobacterium salinarum (strain ATCC 29341 / DSM 671 / R1).